The primary structure comprises 239 residues: Probable transcriptional regulatory protein BCG9842_B4761 (239 aa).

This sequence belongs to the TACO1 family. YeeN subfamily.

It is found in the cytoplasm. The sequence is that of Probable transcriptional regulatory protein BCG9842_B4761 from Bacillus cereus (strain G9842).